Reading from the N-terminus, the 577-residue chain is Proline--tRNA ligase (577 aa).

Belongs to the class-II aminoacyl-tRNA synthetase family. ProS type 1 subfamily. In terms of assembly, homodimer.

The protein localises to the cytoplasm. It carries out the reaction tRNA(Pro) + L-proline + ATP = L-prolyl-tRNA(Pro) + AMP + diphosphate. Catalyzes the attachment of proline to tRNA(Pro) in a two-step reaction: proline is first activated by ATP to form Pro-AMP and then transferred to the acceptor end of tRNA(Pro). As ProRS can inadvertently accommodate and process non-cognate amino acids such as alanine and cysteine, to avoid such errors it has two additional distinct editing activities against alanine. One activity is designated as 'pretransfer' editing and involves the tRNA(Pro)-independent hydrolysis of activated Ala-AMP. The other activity is designated 'posttransfer' editing and involves deacylation of mischarged Ala-tRNA(Pro). The misacylated Cys-tRNA(Pro) is not edited by ProRS. This is Proline--tRNA ligase from Thermotoga maritima (strain ATCC 43589 / DSM 3109 / JCM 10099 / NBRC 100826 / MSB8).